A 93-amino-acid polypeptide reads, in one-letter code: UPF0358 protein ABC2396 (93 aa).

Belongs to the UPF0358 family.

This is UPF0358 protein ABC2396 from Shouchella clausii (strain KSM-K16) (Alkalihalobacillus clausii).